The sequence spans 409 residues: All trans-polyprenyl-diphosphate synthase PDSS1 (409 aa).

Positions 128, 131, and 167 each coordinate isopentenyl diphosphate. Asp-174 and Asp-178 together coordinate Mg(2+). Arg-184 provides a ligand contact to isopentenyl diphosphate.

The protein belongs to the FPP/GGPP synthase family. In terms of assembly, heterotetramer composed of 2 PDSS1/DPS1 and 2 PDSS2/DLP1 subunits. The cofactor is Mg(2+).

The protein localises to the mitochondrion. The enzyme catalyses 7 isopentenyl diphosphate + (2E,6E)-farnesyl diphosphate = all-trans-decaprenyl diphosphate + 7 diphosphate. The catalysed reaction is 6 isopentenyl diphosphate + (2E,6E)-farnesyl diphosphate = all-trans-nonaprenyl diphosphate + 6 diphosphate. It participates in cofactor biosynthesis; ubiquinone biosynthesis. In terms of biological role, heterotetrameric enzyme that catalyzes the condensation of farnesyl diphosphate (FPP), which acts as a primer, and isopentenyl diphosphate (IPP) to produce prenyl diphosphates of varying chain lengths and participates in the determination of the side chain of ubiquinone. Supplies nona and decaprenyl diphosphate, the precursors for the side chain of the isoprenoid quinones ubiquinone-9 (Q9)and ubiquinone-10 (Q10) respectively. The enzyme adds isopentenyl diphosphate molecules sequentially to farnesyl diphosphate with trans stereochemistry. This Mus musculus (Mouse) protein is All trans-polyprenyl-diphosphate synthase PDSS1.